The following is a 742-amino-acid chain: Phosphoribosylformylglycinamidine synthase subunit PurL (742 aa).

Residue His54 is part of the active site. The ATP site is built by Tyr57 and Lys96. Glu98 serves as a coordination point for Mg(2+). Substrate contacts are provided by residues 99-102 (SHNH) and Arg121. Catalysis depends on His100, which acts as the Proton acceptor. A Mg(2+)-binding site is contributed by Asp122. Residue Gln245 participates in substrate binding. Residue Asp273 coordinates Mg(2+). 317–319 (ESQ) contacts substrate. Residues Asp500 and Gly537 each coordinate ATP. Position 538 (Asn538) interacts with Mg(2+). Ser540 provides a ligand contact to substrate.

It belongs to the FGAMS family. In terms of assembly, monomer. Part of the FGAM synthase complex composed of 1 PurL, 1 PurQ and 2 PurS subunits.

Its subcellular location is the cytoplasm. It catalyses the reaction N(2)-formyl-N(1)-(5-phospho-beta-D-ribosyl)glycinamide + L-glutamine + ATP + H2O = 2-formamido-N(1)-(5-O-phospho-beta-D-ribosyl)acetamidine + L-glutamate + ADP + phosphate + H(+). The protein operates within purine metabolism; IMP biosynthesis via de novo pathway; 5-amino-1-(5-phospho-D-ribosyl)imidazole from N(2)-formyl-N(1)-(5-phospho-D-ribosyl)glycinamide: step 1/2. Its function is as follows. Part of the phosphoribosylformylglycinamidine synthase complex involved in the purines biosynthetic pathway. Catalyzes the ATP-dependent conversion of formylglycinamide ribonucleotide (FGAR) and glutamine to yield formylglycinamidine ribonucleotide (FGAM) and glutamate. The FGAM synthase complex is composed of three subunits. PurQ produces an ammonia molecule by converting glutamine to glutamate. PurL transfers the ammonia molecule to FGAR to form FGAM in an ATP-dependent manner. PurS interacts with PurQ and PurL and is thought to assist in the transfer of the ammonia molecule from PurQ to PurL. This chain is Phosphoribosylformylglycinamidine synthase subunit PurL, found in Geobacillus sp. (strain WCH70).